The chain runs to 535 residues: MYFSYIGYFFLPPLVAVPAAAPPVCQPKSATNGHHPVPRLSISSRATVVARMEGASQGGLQTVMKWKTVVAIFVVVVVYLVTGGLVFRALEQPFESSQKNTIALEKAEFLRDHICVSPQELETLIQHALDADNAGVSPVGNSSNSSSHWDLGSAFFFAGTVITTIGYGNIAPSTEGGKIFCILYAIFGIPLFGFLLAGIGDQLGTIFGKSIARVEKVFRKKQVSQTKIRVISTILFILAGCIVFVTIPAVIFKYIEGWTALESIYFVVVTLTTVGFGDFVAGGNAGINYREWYKPLVWFWILVGLAYFAAVLSMIGDWLRVLSKKTKEEVGEIKAHAAEWKANVTAEFRETRRRLSVEIHDKLQRAATIRSMERRRLGLDQRAHSLDMLSPEKRSVFAALDTGRFKASSQESINNRPNNLRLKGPEQLTKHGQGASEDNIINKFGSTSKLTKRKNKDLKKTLPEDVQKIYKTFRNYSLDEEKKEDETEKMCNSDNSSTAMLTECIQQQAEMENGMVPTDTKDQGLENNSLLEDRN.

The Cytoplasmic segment spans residues 1 to 68 (MYFSYIGYFF…GLQTVMKWKT (68 aa)). A helical transmembrane segment spans residues 69-89 (VVAIFVVVVVYLVTGGLVFRA). Positions 151-177 (LGSAFFFAGTVITTIGYGNIAPSTEGG) form an intramembrane region, pore-forming. K(+) is bound by residues Thr164, Ile165, Gly166, and Tyr167. A selectivity filter 1 region spans residues 164-169 (TIGYGN). Residues 179–199 (IFCILYAIFGIPLFGFLLAGI) traverse the membrane as a helical segment. Topologically, residues 200–230 (GDQLGTIFGKSIARVEKVFRKKQVSQTKIRV) are cytoplasmic. Residues 231–251 (ISTILFILAGCIVFVTIPAVI) traverse the membrane as a helical segment. The pore-forming intramembrane region spans 260–291 (ALESIYFVVVTLTTVGFGDFVAGGNAGINYRE). The K(+) site is built by Thr273, Val274, Gly275, and Phe276. The interval 273-278 (TVGFGD) is selectivity filter 2. The chain crosses the membrane as a helical span at residues 296-316 (LVWFWILVGLAYFAAVLSMIG). Topologically, residues 317-535 (DWLRVLSKKT…ENNSLLEDRN (219 aa)) are cytoplasmic. 2 disordered regions span residues 410-438 (QESINNRPNNLRLKGPEQLTKHGQGASED) and 510-535 (EMENGMVPTDTKDQGLENNSLLEDRN). Polar residues predominate over residues 525–535 (LENNSLLEDRN).

In terms of assembly, homodimer; disulfide-linked. Forms heterodimers with other 2-pore domain K(+) channel subunits, such as KCNK2, KCNK4 and KCNK18. As to expression, detected in dorsal root ganglia (DRG) neurons (at protein level).

The protein resides in the cell membrane. It carries out the reaction K(+)(in) = K(+)(out). It catalyses the reaction Rb(+)(in) = Rb(+)(out). The enzyme catalyses Cs(+)(in) = Cs(+)(out). Activated by stimuli such as mechanical stretch, acidic pH and polyunsaturated free fatty acids. Activated by a dihydroacridine analog, ML67-33. Inhibited by polycationic dye ruthenium red. Selectively activated by T2A3 (2-[(4-chloro-3-methylphenyl)amino] benzoic acid). In terms of biological role, k(+) channel that conducts voltage-dependent outward rectifying currents upon membrane depolarization. Voltage sensing is coupled to K(+) electrochemical gradient in an 'ion flux gating' mode where outward but not inward ion flow opens the gate. Converts to voltage-independent 'leak' conductance mode upon stimulation by various stimuli including mechanical membrane stretch, acidic pH, heat and lipids. Homo- and heterodimerizes to form functional channels with distinct regulatory and gating properties. In trigeminal ganglia sensory neurons, the heterodimer of KCNK10/TREK-2 and KCNK18/TRESK inhibits neuronal firing and neurogenic inflammation by stabilizing the resting membrane potential at K(+) equilibrium potential as well as by regulating the threshold of action potentials and the spike frequency. Permeable to other monovalent ions such as Rb(+) and Cs(+). The sequence is that of Potassium channel subfamily K member 10 from Mus musculus (Mouse).